Here is a 281-residue protein sequence, read N- to C-terminus: ATP synthase gamma chain (281 aa).

Belongs to the ATPase gamma chain family. F-type ATPases have 2 components, CF(1) - the catalytic core - and CF(0) - the membrane proton channel. CF(1) has five subunits: alpha(3), beta(3), gamma(1), delta(1), epsilon(1). CF(0) has three main subunits: a, b and c.

The protein resides in the cell inner membrane. In terms of biological role, produces ATP from ADP in the presence of a proton gradient across the membrane. The gamma chain is believed to be important in regulating ATPase activity and the flow of protons through the CF(0) complex. The sequence is that of ATP synthase gamma chain from Ehrlichia chaffeensis (strain ATCC CRL-10679 / Arkansas).